The primary structure comprises 255 residues: MAELRALVAVKRVIDFAVKIRVKPDKSGVVTDGVKHSMNPFCEIAVEEAVRLKEKKLVKEIIAVSCGPSQCQETIRTALAMGADRGIHVEIPGAQAESLGPLQVARVLAKLAEKEKVDLLFLGKQAIDDDCNQTGQMTAGLLDWPQGTFASQVTLEGDKVKVEREIDGGLETLRLKLPAVVTADLRLNEPRYATLPNIMKAKKKKIEVVKAGDLGVDLTSKVSVISVEEPPQRSAGVKVETTEDLVAKLKEVGRI.

An N-acetylalanine modification is found at alanine 2. AMP is bound by residues alanine 9, 39-42 (NPFC), cysteine 66, and 123-134 (GKQAIDDDCNQT). Residues 183–205 (ADLRLNEPRYATLPNIMKAKKKK) form a recognition loop region. Residue lysine 200 is modified to N6,N6,N6-trimethyllysine; by ETFBKMT; alternate. Position 200 is an N6-acetyllysine; alternate (lysine 200). N6-methyllysine; alternate is present on lysine 200. N6,N6,N6-trimethyllysine; by ETFBKMT is present on lysine 203. The residue at position 210 (lysine 210) is an N6-acetyllysine; alternate. At lysine 210 the chain carries N6-succinyllysine; alternate. Phosphoserine occurs at positions 223 and 226. Lysine 238 is subject to N6-acetyllysine. N6-acetyllysine; alternate is present on lysine 248. At lysine 248 the chain carries N6-succinyllysine; alternate.

It belongs to the ETF beta-subunit/FixA family. In terms of assembly, heterodimer composed of ETFA and ETFB. Identified in a complex that contains ETFA, ETFB and ETFRF1. Interacts with ACADM. Methylated. Trimethylation at Lys-200 and Lys-203 may negatively regulate the activity in electron transfer from acyl-CoA dehydrogenases.

Its subcellular location is the mitochondrion matrix. Its function is as follows. Heterodimeric electron transfer flavoprotein that accepts electrons from several mitochondrial dehydrogenases, including acyl-CoA dehydrogenases, glutaryl-CoA and sarcosine dehydrogenase. It transfers the electrons to the main mitochondrial respiratory chain via ETF-ubiquinone oxidoreductase. Required for normal mitochondrial fatty acid oxidation and normal amino acid metabolism. ETFB binds an AMP molecule that probably has a purely structural role. This is Electron transfer flavoprotein subunit beta from Mus musculus (Mouse).